The following is a 432-amino-acid chain: EF-hand calcium-binding domain-containing protein 3 (432 aa).

EF-hand domains lie at 45–80 (AQLE…LGMN) and 81–116 (LNTY…KKLF). Residues D94, D96, D98, K100, and D105 each contribute to the Ca(2+) site. Y273 is modified (phosphotyrosine). Residues 394 to 432 (SMNKSSPSNSGLSSPSDFSESDPETGRKRKRKSSRGFRQ) form a disordered region. The span at 395–411 (MNKSSPSNSGLSSPSDF) shows a compositional bias: low complexity. Over residues 420 to 432 (RKRKRKSSRGFRQ) the composition is skewed to basic residues.

This is EF-hand calcium-binding domain-containing protein 3 (Efcab3) from Mus musculus (Mouse).